A 1088-amino-acid polypeptide reads, in one-letter code: RNA-directed RNA polymerase (1088 aa).

The RdRp catalytic domain maps to 501–687 (LSYGDVTRFL…AKRYIAGGKI (187 aa)).

Belongs to the reoviridae RNA-directed RNA polymerase family. As to quaternary structure, interacts with VP3 (Potential). Interacts with VP2; this interaction activates VP1. Interacts with NSP5; this interaction is probably necessary for the formation of functional virus factories. Interacts with NSP2; this interaction is weak. Mg(2+) is required as a cofactor.

Its subcellular location is the virion. It carries out the reaction RNA(n) + a ribonucleoside 5'-triphosphate = RNA(n+1) + diphosphate. Its function is as follows. RNA-directed RNA polymerase that is involved in both transcription and genome replication. Together with VP3 capping enzyme, forms an enzyme complex positioned near the channels situated at each of the five-fold vertices of the core. Following infection, the outermost layer of the virus is lost, leaving a double-layered particle (DLP) made up of the core and VP6 shell. VP1 then catalyzes the transcription of fully conservative plus-strand genomic RNAs that are extruded through the DLP's channels into the cytoplasm where they function as mRNAs for translation of viral proteins. One copy of each of the viral (+)RNAs is also recruited during core assembly, together with newly synthesized polymerase complexes and VP2. The polymerase of these novo-formed particles catalyzes the synthesis of complementary minus-strands leading to dsRNA formation. To do so, the polymerase specifically recognizes and binds 4 bases 5'-UGUG-3' in the conserved 3'-sequence of plus-strand RNA templates. VP2 presumably activates the autoinhibited VP1-RNA complex to coordinate packaging and genome replication. Once dsRNA synthesis is complete, the polymerase switches to the transcriptional mode, thus providing secondary transcription. The polypeptide is RNA-directed RNA polymerase (Homo sapiens (Human)).